A 292-amino-acid polypeptide reads, in one-letter code: 4-diphosphocytidyl-2-C-methyl-D-erythritol kinase (292 aa).

The active site involves K13. An ATP-binding site is contributed by 97–107; it reads PVAAGLAGGSS. The active site involves D139.

It belongs to the GHMP kinase family. IspE subfamily.

It catalyses the reaction 4-CDP-2-C-methyl-D-erythritol + ATP = 4-CDP-2-C-methyl-D-erythritol 2-phosphate + ADP + H(+). The protein operates within isoprenoid biosynthesis; isopentenyl diphosphate biosynthesis via DXP pathway; isopentenyl diphosphate from 1-deoxy-D-xylulose 5-phosphate: step 3/6. Functionally, catalyzes the phosphorylation of the position 2 hydroxy group of 4-diphosphocytidyl-2C-methyl-D-erythritol. The protein is 4-diphosphocytidyl-2-C-methyl-D-erythritol kinase of Bacillus thuringiensis (strain Al Hakam).